A 279-amino-acid chain; its full sequence is Tryptophan synthase alpha chain (279 aa).

Residues Glu50 and Asp61 each act as proton acceptor in the active site.

Belongs to the TrpA family. Tetramer of two alpha and two beta chains.

The enzyme catalyses (1S,2R)-1-C-(indol-3-yl)glycerol 3-phosphate + L-serine = D-glyceraldehyde 3-phosphate + L-tryptophan + H2O. It participates in amino-acid biosynthesis; L-tryptophan biosynthesis; L-tryptophan from chorismate: step 5/5. Functionally, the alpha subunit is responsible for the aldol cleavage of indoleglycerol phosphate to indole and glyceraldehyde 3-phosphate. The protein is Tryptophan synthase alpha chain of Brucella melitensis biotype 2 (strain ATCC 23457).